The primary structure comprises 341 residues: Uroporphyrinogen decarboxylase (341 aa).

Residues 23–27 (RQAGR), Phe-42, Asp-73, Tyr-148, Ser-203, and His-318 contribute to the substrate site.

Belongs to the uroporphyrinogen decarboxylase family. In terms of assembly, homodimer.

The protein resides in the cytoplasm. It carries out the reaction uroporphyrinogen III + 4 H(+) = coproporphyrinogen III + 4 CO2. It functions in the pathway porphyrin-containing compound metabolism; protoporphyrin-IX biosynthesis; coproporphyrinogen-III from 5-aminolevulinate: step 4/4. Functionally, catalyzes the decarboxylation of four acetate groups of uroporphyrinogen-III to yield coproporphyrinogen-III. In Brucella melitensis biotype 1 (strain ATCC 23456 / CCUG 17765 / NCTC 10094 / 16M), this protein is Uroporphyrinogen decarboxylase.